The sequence spans 358 residues: 3-dehydroquinate synthase (358 aa).

NAD(+) contacts are provided by residues 104-108 (GVIGD), 128-129 (TT), Lys140, Lys149, and 167-170 (FLNT). Zn(2+) is bound by residues Glu182, His246, and His260.

This sequence belongs to the sugar phosphate cyclases superfamily. Dehydroquinate synthase family. Co(2+) serves as cofactor. It depends on Zn(2+) as a cofactor. Requires NAD(+) as cofactor.

The protein resides in the cytoplasm. It catalyses the reaction 7-phospho-2-dehydro-3-deoxy-D-arabino-heptonate = 3-dehydroquinate + phosphate. Its pathway is metabolic intermediate biosynthesis; chorismate biosynthesis; chorismate from D-erythrose 4-phosphate and phosphoenolpyruvate: step 2/7. Its function is as follows. Catalyzes the conversion of 3-deoxy-D-arabino-heptulosonate 7-phosphate (DAHP) to dehydroquinate (DHQ). This chain is 3-dehydroquinate synthase, found in Staphylococcus carnosus (strain TM300).